A 338-amino-acid polypeptide reads, in one-letter code: Heat-inducible transcription repressor HrcA (338 aa).

Belongs to the HrcA family.

Functionally, negative regulator of class I heat shock genes (grpE-dnaK-dnaJ and groELS operons). Prevents heat-shock induction of these operons. The chain is Heat-inducible transcription repressor HrcA from Thermotoga petrophila (strain ATCC BAA-488 / DSM 13995 / JCM 10881 / RKU-1).